A 440-amino-acid chain; its full sequence is Ultraviolet-B receptor UVR8 (440 aa).

At Ala2 the chain carries N-acetylalanine. 8 RCC1 repeats span residues 2-31, 32-84, 86-137, 139-189, 190-241, 243-293, 294-345, and 347-399; these read AEDM…VALL, SGDI…AYSQ, GMEV…AVTM, GEVQ…AVTE, DGDL…SVSY, GALY…ALTS, DGKL…AVTE, and NNVF…SGKS. Positions 397–423 are required for interaction with COP1; that stretch reads GKSWVSPAERYAVVPDETGLTDGSSKG. A disordered region spans residues 413–440; that stretch reads ETGLTDGSSKGNGGDISVPQTDVKRVRI.

As to quaternary structure, homodimer in the absence of UV-B, but absorption of UV-B induces monomerization of UVR8 and interaction with COP1. Interacts with RUP1, RUP2 and histone H2B.

It localises to the nucleus. It is found in the cytoplasm. The protein resides in the cytosol. Functionally, UV-B specific signaling component that acts as a UV-B photoreceptor and plays a key role in establishing UV-protective responses in plants. Upon UV-B irradiation, UVR8 undergoes an immediate switch from homodimer to monomer, accumulates in the nucleus, interacts with the photomorphogenic repressor COP1 and regulates the expression of the transcription factor HY5 by associating with chromatin (through histone H2B binding) in the HY5 promoter region. UVR8 is involved in controlling aspects of leaf growth and morphogenesis in response to UV-B, is required for normal progression of endocycle and has a regulatory role in stomatal differentiation. Is required for plant circadian clock response to photomorphogenic UV-B light, partly through the transcriptional activation of responsive clock genes. Promotes photosynthetic efficiency at elevated levels of UV-B. Plays a role in mediating the effects of UV-B radiation on pathogen resistance by controlling the expression of the sinapate biosynthetic pathway. The two tryptophans, Trp-285 and Trp-233, serve collectively as the UV-B chromophore. The protein is Ultraviolet-B receptor UVR8 of Arabidopsis thaliana (Mouse-ear cress).